A 310-amino-acid chain; its full sequence is ADP-L-glycero-D-manno-heptose-6-epimerase (310 aa).

Residues 10-11 (FI), 31-32 (DN), K38, K53, 75-79 (EGACS), and N92 each bind NADP(+). Y140 functions as the Proton acceptor in the catalytic mechanism. NADP(+) is bound at residue K144. Residue N169 participates in substrate binding. NADP(+) contacts are provided by V170 and K178. The active-site Proton acceptor is K178. Substrate-binding positions include S180, H187, 201-204 (FEGS), R209, and Y272.

Belongs to the NAD(P)-dependent epimerase/dehydratase family. HldD subfamily. Homopentamer. NADP(+) is required as a cofactor.

It catalyses the reaction ADP-D-glycero-beta-D-manno-heptose = ADP-L-glycero-beta-D-manno-heptose. It functions in the pathway nucleotide-sugar biosynthesis; ADP-L-glycero-beta-D-manno-heptose biosynthesis; ADP-L-glycero-beta-D-manno-heptose from D-glycero-beta-D-manno-heptose 7-phosphate: step 4/4. It participates in bacterial outer membrane biogenesis; LPS core biosynthesis. Functionally, catalyzes the interconversion between ADP-D-glycero-beta-D-manno-heptose and ADP-L-glycero-beta-D-manno-heptose via an epimerization at carbon 6 of the heptose. This chain is ADP-L-glycero-D-manno-heptose-6-epimerase, found in Klebsiella pneumoniae.